We begin with the raw amino-acid sequence, 189 residues long: Group XIIA secretory phospholipase A2 (189 aa).

A signal peptide spans 1-22 (MALLSRPALTLLLLLMAAVVRC). Residues Gly88, Pro90, and Phe92 each coordinate Ca(2+). The active site involves His110. Asp111 is a binding site for Ca(2+). The active site involves Asp125.

It depends on Ca(2+) as a cofactor. Abundantly expressed in heart, skeletal muscle, kidney, liver and pancreas.

The protein resides in the secreted. Its subcellular location is the cytoplasm. It catalyses the reaction a 1,2-diacyl-sn-glycero-3-phosphocholine + H2O = a 1-acyl-sn-glycero-3-phosphocholine + a fatty acid + H(+). PA2 catalyzes the calcium-dependent hydrolysis of the 2-acyl groups in 3-sn-phosphoglycerides. Does not exhibit detectable activity toward sn-2-arachidonoyl- or linoleoyl-phosphatidylcholine or -phosphatidylethanolamine. The sequence is that of Group XIIA secretory phospholipase A2 (PLA2G12A) from Homo sapiens (Human).